Reading from the N-terminus, the 78-residue chain is Large ribosomal subunit protein bL28 (78 aa).

Residues 1–23 (MSRVCQVTGKRPITGNNVSHSKR) are disordered.

Belongs to the bacterial ribosomal protein bL28 family.

This is Large ribosomal subunit protein bL28 from Marinomonas sp. (strain MWYL1).